Reading from the N-terminus, the 796-residue chain is Protein translocase subunit SecA 2 (796 aa).

ATP is bound by residues glutamine 84, 102 to 106 (GEGKT), and aspartate 496.

It belongs to the SecA family. In terms of assembly, monomer and homodimer (Potential). Part of the accessory SecA2/SecY2 protein translocation apparatus required to export cell wall protein SraP.

The protein resides in the cell membrane. It is found in the cytoplasm. It carries out the reaction ATP + H2O + cellular proteinSide 1 = ADP + phosphate + cellular proteinSide 2.. In terms of biological role, part of the accessory SecA2/SecY2 system specifically required to export SraP, a serine-rich repeat cell wall protein encoded upstream in the same operon. The chain is Protein translocase subunit SecA 2 from Staphylococcus aureus (strain NCTC 8325 / PS 47).